The primary structure comprises 185 residues: Ribosome-recycling factor (185 aa).

The segment at 135–159 is disordered; that stretch reads ANDEVKKLEKDKAITEDESKKGQDE.

The protein belongs to the RRF family.

It is found in the cytoplasm. Its function is as follows. Responsible for the release of ribosomes from messenger RNA at the termination of protein biosynthesis. May increase the efficiency of translation by recycling ribosomes from one round of translation to another. In Campylobacter curvus (strain 525.92), this protein is Ribosome-recycling factor.